Consider the following 193-residue polypeptide: Ribosomal RNA large subunit methyltransferase E (193 aa).

S-adenosyl-L-methionine is bound by residues Gly-48, Phe-50, Asp-67, Asn-85, and Asp-107. The active-site Proton acceptor is the Lys-147.

Belongs to the class I-like SAM-binding methyltransferase superfamily. RNA methyltransferase RlmE family.

The protein resides in the cytoplasm. It carries out the reaction uridine(2552) in 23S rRNA + S-adenosyl-L-methionine = 2'-O-methyluridine(2552) in 23S rRNA + S-adenosyl-L-homocysteine + H(+). Its function is as follows. Specifically methylates the uridine in position 2552 of 23S rRNA at the 2'-O position of the ribose in the fully assembled 50S ribosomal subunit. The polypeptide is Ribosomal RNA large subunit methyltransferase E (Borrelia duttonii (strain Ly)).